A 388-amino-acid chain; its full sequence is Chorismate synthase (388 aa).

Residues R39 and R45 each contribute to the NADP(+) site. FMN contacts are provided by residues 130 to 132, 251 to 252, G296, 311 to 315, and R337; these read RSS, NA, and KPIPT.

The protein belongs to the chorismate synthase family. As to quaternary structure, homotetramer. The cofactor is FMNH2.

It catalyses the reaction 5-O-(1-carboxyvinyl)-3-phosphoshikimate = chorismate + phosphate. The protein operates within metabolic intermediate biosynthesis; chorismate biosynthesis; chorismate from D-erythrose 4-phosphate and phosphoenolpyruvate: step 7/7. Its function is as follows. Catalyzes the anti-1,4-elimination of the C-3 phosphate and the C-6 proR hydrogen from 5-enolpyruvylshikimate-3-phosphate (EPSP) to yield chorismate, which is the branch point compound that serves as the starting substrate for the three terminal pathways of aromatic amino acid biosynthesis. This reaction introduces a second double bond into the aromatic ring system. This chain is Chorismate synthase, found in Streptococcus pyogenes serotype M6 (strain ATCC BAA-946 / MGAS10394).